A 370-amino-acid polypeptide reads, in one-letter code: A-type ATP synthase subunit C (370 aa).

It belongs to the V-ATPase V0D/AC39 subunit family. As to quaternary structure, has multiple subunits with at least A(3), B(3), C, D, E, F, H, I and proteolipid K(x).

It is found in the cell membrane. Component of the A-type ATP synthase that produces ATP from ADP in the presence of a proton gradient across the membrane. This Pyrococcus furiosus (strain ATCC 43587 / DSM 3638 / JCM 8422 / Vc1) protein is A-type ATP synthase subunit C.